The sequence spans 206 residues: Shieldin complex subunit 1 (206 aa).

Composition is skewed to polar residues over residues 1–15, 33–43, and 60–69; these read MATQETTPGSQTEES, RPSQQTNSEAF, and DSSNLNTEQN. Disordered regions lie at residues 1–21 and 33–69; these read MATQETTPGSQTEESNALDLP and RPSQQTNSEAFSSEEACSIPCSSDVDPDSSNLNTEQN.

As to quaternary structure, component of the shieldin complex, consisting of SHLD1, SHLD2, SHLD3 and MAD2L2/REV7. Within the complex, SHLD2 forms a scaffold which interacts with a SHLD3-MAD2L2 subcomplex via its N-terminus, and with SHLD1 via its C-terminus. Interacts with ASTE1.

The protein resides in the chromosome. Its function is as follows. Component of the shieldin complex, which plays an important role in repair of DNA double-stranded breaks (DSBs). During G1 and S phase of the cell cycle, the complex functions downstream of TP53BP1 to promote non-homologous end joining (NHEJ) and suppress DNA end resection. Mediates various NHEJ-dependent processes including immunoglobulin class-switch recombination, and fusion of unprotected telomeres. This is Shieldin complex subunit 1 from Bos taurus (Bovine).